Here is a 339-residue protein sequence, read N- to C-terminus: 7,8-didemethyl-8-hydroxy-5-deazariboflavin synthase (339 aa).

Positions 25–256 (ATYSPAYTIV…PDITIQIPPN (232 aa)) constitute a Radical SAM core domain. [4Fe-4S] cluster-binding residues include Cys-39, Cys-43, and Cys-46.

The protein belongs to the radical SAM superfamily. CofG family. In terms of assembly, consists of two subunits, CofG and CofH. Requires [4Fe-4S] cluster as cofactor.

The catalysed reaction is 5-amino-5-(4-hydroxybenzyl)-6-(D-ribitylimino)-5,6-dihydrouracil + S-adenosyl-L-methionine = 7,8-didemethyl-8-hydroxy-5-deazariboflavin + 5'-deoxyadenosine + L-methionine + NH4(+) + H(+). It participates in cofactor biosynthesis; coenzyme F0 biosynthesis. Catalyzes the radical-mediated synthesis of 7,8-didemethyl-8-hydroxy-5-deazariboflavin from 5-amino-5-(4-hydroxybenzyl)-6-(D-ribitylimino)-5,6-dihydrouracil. This Nostoc sp. (strain PCC 7120 / SAG 25.82 / UTEX 2576) protein is 7,8-didemethyl-8-hydroxy-5-deazariboflavin synthase.